We begin with the raw amino-acid sequence, 753 residues long: ATPase family gene 2 protein homolog B (753 aa).

At Met-1 the chain carries N-acetylmethionine. The required for interaction with AFG2A and CINP stretch occupies residues 1–189; it reads MAPDSDPFPE…PRTRVSLGGE (189 aa). Positions 171–203 are disordered; the sequence is SPDPAGLVTPRTRVSLGGEPPSEAQPQPEVPLG. Residues 241–248 and 505–512 contribute to the ATP site; these read GPPGVGKT and GPPGCAKT.

The protein belongs to the AAA ATPase family. AFG2 subfamily. As to quaternary structure, part of the 55LCC heterohexameric ATPase complex composed at least of AIRIM, AFG2A, AFG2B and CINP. Associates with pre-60S ribosomal particles. In terms of tissue distribution, expressed in both neurons and glia during embryonic and adult stages of brain development.

The protein resides in the cytoplasm. It is found in the cytoskeleton. The protein localises to the spindle. Its subcellular location is the nucleus. It carries out the reaction ATP + H2O = ADP + phosphate + H(+). With respect to regulation, in the context of 55LCC heterohexameric ATPase complex, the ATPase activity is stimulated by DNA binding and inhibited in presence of RNA. Its function is as follows. ATP-dependent chaperone part of the 55LCC heterohexameric ATPase complex which is chromatin-associated and promotes replisome proteostasis to maintain replication fork progression and genome stability. Required for replication fork progression, sister chromatid cohesion, and chromosome stability. The ATPase activity is specifically enhanced by replication fork DNA and is coupled to cysteine protease-dependent cleavage of replisome substrates in response to replication fork damage. Uses ATPase activity to process replisome substrates in S-phase, facilitating their proteolytic turnover from chromatin to ensure DNA replication and mitotic fidelity. Plays an essential role in the cytoplasmic maturation steps of pre-60S ribosomal particles by promoting the release of shuttling protein RSL24D1/RLP24 from the pre-ribosomal particles. The protein is ATPase family gene 2 protein homolog B of Homo sapiens (Human).